The sequence spans 768 residues: Solabiose phosphorylase (768 aa).

Asp-456 functions as the Proton donor in the catalytic mechanism.

It belongs to the glycosyl hydrolase 94 family.

It carries out the reaction solabiose + phosphate = D-galactose + alpha-D-glucose 1-phosphate. Functionally, catalyzes the reversible phosphorolysis of solabiose. Catalyzes the phosphorolysis and synthesis of solabiose through a sequential bi-bi mechanism involving the formation of a ternary complex. Is probably involved in the metabolism of solabiose released from solabiose-containing compounds. In Paenibacillus borealis, this protein is Solabiose phosphorylase.